Here is a 389-residue protein sequence, read N- to C-terminus: Chalcone synthase H2 (389 aa).

The active site involves cysteine 164.

This sequence belongs to the thiolase-like superfamily. Chalcone/stilbene synthases family.

It localises to the cytoplasm. The enzyme catalyses (E)-4-coumaroyl-CoA + 3 malonyl-CoA + 3 H(+) = 2',4,4',6'-tetrahydroxychalcone + 3 CO2 + 4 CoA. It participates in secondary metabolite biosynthesis; flavonoid biosynthesis. Its function is as follows. Involved in the biosynthesis of prenylated phenolics natural products which contribute to the bitter taste of beer and display broad biological activities. Chalcone synthase that can use 4-coumaroyl-CoA to produce 4,2',4',6'-tetrahydroxychalcone (also termed naringenin-chalcone or chalcone) which can, under specific conditions, spontaneously isomerize into naringenin. In Humulus lupulus (European hop), this protein is Chalcone synthase H2.